The sequence spans 354 residues: MKVLGIESSCDETGVAVYDTALSGVPALRAHAVYSQIALHAEYGGVVPELASRDHVRKLLPLIRQTLGEAGVGIDELDGVAYTAGPGLVGALLVGAGVARSLAWALDVPAIGVHHMEGHLLAPLMEDDPPEPPFVALLVSGGHTQLVSVKALGSYEVLGETLDDAAGEAFDKTAKMMGLPYPGGPQLAALAETGTPGRYRFARPMTDRPGLDFSFSGLKTQVLLAWRSSDQSDTTRADIARGFEDAVVDTLVIKCLRALDAAECNTLVVAGGVGVNKRLRARLQEAAQRRGGRVCFPRPALCTDNGAMIAFAGALRLQAGERADAAVHVTPRWDMAALPPLAAGRDSGVEIREW.

Residues histidine 115 and histidine 119 each contribute to the Fe cation site. Substrate-binding positions include 138–142 (LVSGG), aspartate 171, glycine 184, and asparagine 276. Aspartate 304 lines the Fe cation pocket.

It belongs to the KAE1 / TsaD family. Fe(2+) is required as a cofactor.

Its subcellular location is the cytoplasm. The enzyme catalyses L-threonylcarbamoyladenylate + adenosine(37) in tRNA = N(6)-L-threonylcarbamoyladenosine(37) in tRNA + AMP + H(+). Required for the formation of a threonylcarbamoyl group on adenosine at position 37 (t(6)A37) in tRNAs that read codons beginning with adenine. Is involved in the transfer of the threonylcarbamoyl moiety of threonylcarbamoyl-AMP (TC-AMP) to the N6 group of A37, together with TsaE and TsaB. TsaD likely plays a direct catalytic role in this reaction. In Xanthomonas oryzae pv. oryzae (strain MAFF 311018), this protein is tRNA N6-adenosine threonylcarbamoyltransferase.